Here is a 238-residue protein sequence, read N- to C-terminus: Sugar fermentation stimulation protein homolog (238 aa).

The protein belongs to the SfsA family.

In Pseudoalteromonas translucida (strain TAC 125), this protein is Sugar fermentation stimulation protein homolog.